The following is a 465-amino-acid chain: uncharacterized protein (465 aa).

3 disordered regions span residues 1–55 (MNSS…SSHQ), 70–164 (DFSE…VEGQ), and 221–313 (TTDN…KQRV). The span at 40 to 50 (ENYKDNSDHSN) shows a compositional bias: basic and acidic residues. The segment covering 73–82 (ESFNDNQNLK) has biased composition (polar residues). Residues 83-134 (NFNTTDNNFNDDYNNDYDSNNDSNNDSNNDSNNDYDNESNNYFNNDSNNDSN) show a composition bias toward low complexity. Residues 141–150 (ETTKHKLPIE) are compositionally biased toward basic and acidic residues. A compositionally biased stretch (low complexity) spans 221–235 (TTDNQSNTESSQENN). 2 stretches are compositionally biased toward basic and acidic residues: residues 236–249 (VIKKEPNNKLDKQP) and 259–275 (IVPKQETDKKSPVKSIK). Residues 288–306 (IDQSNKLGKSYNTNNNNSK) are compositionally biased toward polar residues. Residues 390-423 (NKASIAELKKMRLEQRKREIEEKRRQVENKKPDS) are a coiled coil.

This is an uncharacterized protein from Acanthamoeba polyphaga mimivirus (APMV).